A 206-amino-acid chain; its full sequence is MAKVEVCNMSGEKVSEIDLADEIFGVEVKGSVLHEVVVMQLANRRAGTVCVKNRSDVRGSTRKLYRQKGTGRARKGDIKSPVLRGGGVVFGPHPRDYSYKVPKKVRKAALKMALSSKLADNSLKVVDNMDLPEIKTKAFAEAMAAMGVDTALIVTTGEEKNLELSARNVKGVKVMPTAGLNVYDILKYGNLILAQGAIEAIEGRLL.

Belongs to the universal ribosomal protein uL4 family. Part of the 50S ribosomal subunit.

One of the primary rRNA binding proteins, this protein initially binds near the 5'-end of the 23S rRNA. It is important during the early stages of 50S assembly. It makes multiple contacts with different domains of the 23S rRNA in the assembled 50S subunit and ribosome. Functionally, forms part of the polypeptide exit tunnel. The chain is Large ribosomal subunit protein uL4 from Desulfatibacillum aliphaticivorans.